The chain runs to 283 residues: Thymidylate synthase (283 aa).

Residue Arg-22 coordinates dUMP. The Nucleophile role is filled by Cys-160. DUMP is bound by residues 180-183 (RSCD), Asn-191, and 221-223 (HIY). Asp-183 contributes to the (6R)-5,10-methylene-5,6,7,8-tetrahydrofolate binding site. Ser-282 contacts (6R)-5,10-methylene-5,6,7,8-tetrahydrofolate.

The protein belongs to the thymidylate synthase family. Bacterial-type ThyA subfamily. Homodimer.

The protein resides in the cytoplasm. The catalysed reaction is dUMP + (6R)-5,10-methylene-5,6,7,8-tetrahydrofolate = 7,8-dihydrofolate + dTMP. It functions in the pathway pyrimidine metabolism; dTTP biosynthesis. Catalyzes the reductive methylation of 2'-deoxyuridine-5'-monophosphate (dUMP) to 2'-deoxythymidine-5'-monophosphate (dTMP) while utilizing 5,10-methylenetetrahydrofolate (mTHF) as the methyl donor and reductant in the reaction, yielding dihydrofolate (DHF) as a by-product. This enzymatic reaction provides an intracellular de novo source of dTMP, an essential precursor for DNA biosynthesis. This is Thymidylate synthase from Vibrio vulnificus (strain YJ016).